The chain runs to 328 residues: Probable membrane-associated kinase regulator 4 (328 aa).

The segment at 213–253 (GQIKTERPKKQSNGSVSGSHRRSFSVSMRRQAAKSSNNKSS) is disordered. Residues 223–240 (QSNGSVSGSHRRSFSVSM) are compositionally biased toward polar residues.

The protein resides in the cell membrane. The chain is Probable membrane-associated kinase regulator 4 (MAKR4) from Arabidopsis thaliana (Mouse-ear cress).